The sequence spans 338 residues: S-adenosylmethionine:tRNA ribosyltransferase-isomerase (338 aa).

The protein belongs to the QueA family. As to quaternary structure, monomer.

It is found in the cytoplasm. It catalyses the reaction 7-aminomethyl-7-carbaguanosine(34) in tRNA + S-adenosyl-L-methionine = epoxyqueuosine(34) in tRNA + adenine + L-methionine + 2 H(+). Its pathway is tRNA modification; tRNA-queuosine biosynthesis. Functionally, transfers and isomerizes the ribose moiety from AdoMet to the 7-aminomethyl group of 7-deazaguanine (preQ1-tRNA) to give epoxyqueuosine (oQ-tRNA). This is S-adenosylmethionine:tRNA ribosyltransferase-isomerase from Carboxydothermus hydrogenoformans (strain ATCC BAA-161 / DSM 6008 / Z-2901).